The primary structure comprises 453 residues: Adenosylmethionine-8-amino-7-oxononanoate aminotransferase (453 aa).

Residue 118–119 (GA) participates in pyridoxal 5'-phosphate binding. Tyrosine 151 provides a ligand contact to substrate. Residue aspartate 257 coordinates pyridoxal 5'-phosphate. Substrate contacts are provided by lysine 286, glycine 321, and arginine 416. Lysine 286 carries the post-translational modification N6-(pyridoxal phosphate)lysine.

It belongs to the class-III pyridoxal-phosphate-dependent aminotransferase family. BioA subfamily. Homodimer. The cofactor is pyridoxal 5'-phosphate.

It is found in the cytoplasm. It catalyses the reaction (8S)-8-amino-7-oxononanoate + S-adenosyl-L-methionine = S-adenosyl-4-methylsulfanyl-2-oxobutanoate + (7R,8S)-7,8-diammoniononanoate. Its pathway is cofactor biosynthesis; biotin biosynthesis; 7,8-diaminononanoate from 8-amino-7-oxononanoate (SAM route): step 1/1. Its function is as follows. Catalyzes the transfer of the alpha-amino group from S-adenosyl-L-methionine (SAM) to 7-keto-8-aminopelargonic acid (KAPA) to form 7,8-diaminopelargonic acid (DAPA). It is the only aminotransferase known to utilize SAM as an amino donor. The sequence is that of Adenosylmethionine-8-amino-7-oxononanoate aminotransferase from Aquifex aeolicus (strain VF5).